The following is a 105-amino-acid chain: uncharacterized protein (105 aa).

The Hcy-binding domain maps to 1–101; the sequence is MMDLGDKINP…KDIQEISAAV (101 aa).

This is an uncharacterized protein from Saccharomyces cerevisiae (strain ATCC 204508 / S288c) (Baker's yeast).